Here is a 315-residue protein sequence, read N- to C-terminus: ADP/ATP translocase 4 (315 aa).

Over 1 to 19 (MHREPAKKKAEKRLFDASS) the chain is Mitochondrial intermembrane. The stretch at 18–110 (SSFGKDLLAG…FAFKDKYKQL (93 aa)) is one Solcar 1 repeat. Residues 20–49 (FGKDLLAGGVAAAVSKTAVAPIERVKLLLQ) form a helical membrane-spanning segment. The Mitochondrial matrix portion of the chain corresponds to 50-86 (VQASSKQISPEARYKGMVDCLVRIPREQGFFSFWRGN). A helical membrane pass occupies residues 87-111 (LANVIRYFPTQALNFAFKDKYKQLF). Residues arginine 92 and lysine 104 each contribute to the ADP site. Over 112 to 121 (MSGVNKEKQF) the chain is Mitochondrial intermembrane. Residues 122-142 (WRWFLANLASGGAAGATSLCV) form a helical membrane-spanning segment. Solcar repeat units follow at residues 123 to 213 (RWFL…VKGL) and 220 to 307 (TPFL…IKEF). The Mitochondrial matrix portion of the chain corresponds to 143-190 (VYPLDFARTRLGVDIGKGPEERQFKGLGDCIMKIAKSDGIAGLYQGFG). A helical transmembrane segment spans residues 191 to 211 (VSVQGIIVYRASYFGAYDTVK). Residues 212–222 (GLLPKPKKTPF) are Mitochondrial intermembrane-facing. The chain crosses the membrane as a helical span at residues 223–243 (LVSFFIAQVVTTCSGILSYPF). Residues 244 to 283 (DTVRRRMMMQSGEAKRQYKGTLDCFVKIYQHEGISSFFRG) lie on the Mitochondrial matrix side of the membrane. Residue arginine 247 coordinates ADP. The segment at 247 to 252 (RRRMMM) is important for transport activity. A Nucleotide carrier signature motif motif is present at residues 247–252 (RRRMMM). The helical transmembrane segment at 284–301 (AFSNVLRGTGGALVLVLY) threads the bilayer. The Mitochondrial intermembrane portion of the chain corresponds to 302–315 (DKIKEFFHIDIGGR).

The protein belongs to the mitochondrial carrier (TC 2.A.29) family. Monomer. Expressed in brain, liver, sperm and testis. In testis, expressed at higher level in spermatocytes, while it is expressed at lower level in spermatogonial cells. Expressed in erythrocytes (at protein level).

The protein localises to the mitochondrion inner membrane. It localises to the membrane. Its subcellular location is the cell projection. It is found in the cilium. The protein resides in the flagellum membrane. The enzyme catalyses ADP(in) + ATP(out) = ADP(out) + ATP(in). It catalyses the reaction dATP(out) + ADP(in) = dATP(in) + ADP(out). It carries out the reaction dADP(in) + ADP(out) = dADP(out) + ADP(in). The catalysed reaction is H(+)(in) = H(+)(out). The matrix-open state (m-state) is inhibited by the membrane-permeable bongkrekic acid (BKA). The cytoplasmic-open state (c-state) is inhibited by the membrane-impermeable toxic inhibitor carboxyatractyloside (CATR). Proton transporter activity is inhibited by ADP:ATP antiporter activity. In terms of biological role, ADP:ATP antiporter that mediates import of ADP into the mitochondrial matrix for ATP synthesis, and export of ATP out to fuel the cell. Cycles between the cytoplasmic-open state (c-state) and the matrix-open state (m-state): operates by the alternating access mechanism with a single substrate-binding site intermittently exposed to either the cytosolic (c-state) or matrix (m-state) side of the inner mitochondrial membrane. Specifically required during spermatogenesis, probably to mediate ADP:ATP exchange in spermatocytes. Large ATP supplies from mitochondria may be critical for normal progression of spermatogenesis during early stages of meiotic prophase I, including DNA double-strand break repair and chromosomal synapsis. In addition to its ADP:ATP antiporter activity, also involved in mitochondrial uncoupling and mitochondrial permeability transition pore (mPTP) activity. Plays a role in mitochondrial uncoupling by acting as a proton transporter: proton transport uncouples the proton flows via the electron transport chain and ATP synthase to reduce the efficiency of ATP production and cause mitochondrial thermogenesis. Proton transporter activity is inhibited by ADP:ATP antiporter activity, suggesting that SLC25A31/ANT4 acts as a master regulator of mitochondrial energy output by maintaining a delicate balance between ATP production (ADP:ATP antiporter activity) and thermogenesis (proton transporter activity). Proton transporter activity requires free fatty acids as cofactor, but does not transport it. Among nucleotides, may also exchange ADP for dATP and dADP. Also plays a key role in mPTP opening, a non-specific pore that enables free passage of the mitochondrial membranes to solutes of up to 1.5 kDa, and which contributes to cell death. It is however unclear if SLC25A31/ANT4 constitutes a pore-forming component of mPTP or regulates it. The polypeptide is ADP/ATP translocase 4 (Homo sapiens (Human)).